The sequence spans 404 residues: Argininosuccinate synthase (404 aa).

Residues Ala11 to Ser19 and Ala40 each bind ATP. Tyr92 and Ser97 together coordinate L-citrulline. Residue Gly122 coordinates ATP. L-aspartate is bound by residues Thr124, Asn128, and Asp129. Asn128 lines the L-citrulline pocket. L-citrulline contacts are provided by Arg132, Ser181, Ser190, Glu266, and Tyr278.

It belongs to the argininosuccinate synthase family. Type 1 subfamily. Homotetramer.

It is found in the cytoplasm. It carries out the reaction L-citrulline + L-aspartate + ATP = 2-(N(omega)-L-arginino)succinate + AMP + diphosphate + H(+). It functions in the pathway amino-acid biosynthesis; L-arginine biosynthesis; L-arginine from L-ornithine and carbamoyl phosphate: step 2/3. This chain is Argininosuccinate synthase, found in Moritella abyssi.